The sequence spans 247 residues: Probable transcriptional regulatory protein Swit_2142 (247 aa).

Positions 1–14 are enriched in basic residues; that stretch reads MAGHSKFKNIMHRK. The interval 1–21 is disordered; that stretch reads MAGHSKFKNIMHRKGAQDKKR.

This sequence belongs to the TACO1 family.

It is found in the cytoplasm. This is Probable transcriptional regulatory protein Swit_2142 from Rhizorhabdus wittichii (strain DSM 6014 / CCUG 31198 / JCM 15750 / NBRC 105917 / EY 4224 / RW1) (Sphingomonas wittichii).